We begin with the raw amino-acid sequence, 189 residues long: Transcription factor FapR (189 aa).

This sequence belongs to the FapR family.

Transcriptional factor involved in regulation of membrane lipid biosynthesis by repressing genes involved in fatty acid and phospholipid metabolism. The polypeptide is Transcription factor FapR (Listeria monocytogenes serotype 4a (strain HCC23)).